A 534-amino-acid chain; its full sequence is Peptide chain release factor 3 (534 aa).

One can recognise a tr-type G domain in the interval 9-278 (ARRRTFAIIS…FFVEHAPPPQ (270 aa)). GTP contacts are provided by residues 18–25 (SHPDAGKT), 86–90 (DTPGH), and 140–143 (NKLD).

Belongs to the TRAFAC class translation factor GTPase superfamily. Classic translation factor GTPase family. PrfC subfamily.

Its subcellular location is the cytoplasm. In terms of biological role, increases the formation of ribosomal termination complexes and stimulates activities of RF-1 and RF-2. It binds guanine nucleotides and has strong preference for UGA stop codons. It may interact directly with the ribosome. The stimulation of RF-1 and RF-2 is significantly reduced by GTP and GDP, but not by GMP. The polypeptide is Peptide chain release factor 3 (Xanthomonas campestris pv. campestris (strain 8004)).